Consider the following 95-residue polypeptide: Small ribosomal subunit protein uS19 (95 aa).

Belongs to the universal ribosomal protein uS19 family.

Functionally, protein S19 forms a complex with S13 that binds strongly to the 16S ribosomal RNA. The polypeptide is Small ribosomal subunit protein uS19 (Syntrophobacter fumaroxidans (strain DSM 10017 / MPOB)).